Here is a 209-residue protein sequence, read N- to C-terminus: Uracil phosphoribosyltransferase (209 aa).

5-phospho-alpha-D-ribose 1-diphosphate is bound by residues Arg-79, Arg-104, and Asp-131–Ser-139. Residues Ile-194 and Gly-199 to Ala-201 contribute to the uracil site. Asp-200 lines the 5-phospho-alpha-D-ribose 1-diphosphate pocket.

The protein belongs to the UPRTase family. Mg(2+) serves as cofactor.

The catalysed reaction is UMP + diphosphate = 5-phospho-alpha-D-ribose 1-diphosphate + uracil. Its pathway is pyrimidine metabolism; UMP biosynthesis via salvage pathway; UMP from uracil: step 1/1. Its activity is regulated as follows. Allosterically activated by GTP. In terms of biological role, catalyzes the conversion of uracil and 5-phospho-alpha-D-ribose 1-diphosphate (PRPP) to UMP and diphosphate. This chain is Uracil phosphoribosyltransferase, found in Clostridium beijerinckii (strain ATCC 51743 / NCIMB 8052) (Clostridium acetobutylicum).